Here is a 679-residue protein sequence, read N- to C-terminus: Stress-70 protein, mitochondrial (679 aa).

The transit peptide at Met1 to Tyr46 directs the protein to the mitochondrion. The tract at residues Met1–Val432 is interaction with NFS1. ADP-binding residues include Thr63 and Asn64. Residues Thr63–Asp431 are nucleotide-binding domain (NBD). The residue at position 76 (Lys76) is an N6-acetyllysine. Thr87 is subject to Phosphothreonine. Residues Lys135 and Lys138 each carry the N6-acetyllysine; alternate modification. N6-succinyllysine; alternate is present on residues Lys135 and Lys138. The residue at position 143 (Lys143) is an N6-acetyllysine. Lys206 carries the N6-acetyllysine; alternate modification. Lys206 carries the post-translational modification N6-succinyllysine; alternate. Residue Lys206 is modified to N6-malonyllysine; alternate. Residues Lys234 and Lys288 each carry the N6-acetyllysine modification. N6-acetyllysine; alternate is present on Lys300. Lys300 carries the post-translational modification N6-succinyllysine; alternate. The ADP site is built by Glu313, Lys316, and Ser320. Lys368 is modified (N6-succinyllysine). Positions 388 and 391 each coordinate ADP. Lys394 is subject to N6-succinyllysine. Position 408 is a phosphoserine (Ser408). The tract at residues Val432 to Thr441 is interdomain linker. Residues Val432–Gln679 form an interaction with FXN and ISCU region. The tract at residues Pro442–Gln679 is substrate-binding domain (SBD). Omega-N-methylarginine is present on Arg513. N6-acetyllysine; alternate occurs at positions 567 and 600. 2 positions are modified to N6-succinyllysine; alternate: Lys567 and Lys600. Residue Lys610 is modified to N6-succinyllysine. At Lys612 the chain carries N6-acetyllysine. Lys646 carries the post-translational modification N6-acetyllysine; alternate. The residue at position 646 (Lys646) is an N6-succinyllysine; alternate. The tract at residues Ala656–Gln679 is disordered. Basic and acidic residues predominate over residues Glu669–Gln679.

Belongs to the heat shock protein 70 family. As to quaternary structure, interacts strongly with the intermediate form of FXN and weakly with its mature form. Interacts with HSCB. Associates with the mitochondrial contact site and cristae organizing system (MICOS) complex, composed of at least MICOS10/MIC10, CHCHD3/MIC19, CHCHD6/MIC25, APOOL/MIC27, IMMT/MIC60, APOO/MIC23/MIC26 and QIL1/MIC13. This complex was also known under the names MINOS or MitOS complex. The MICOS complex associates with mitochondrial outer membrane proteins SAMM50, MTX1, MTX2 and DNAJC11, mitochondrial inner membrane protein TMEM11 and with HSPA9. Interacts with DNLZ, the interaction is required to prevent self-aggregation. Interacts with TESPA1. Interacts with PDPN. Interacts with NFU1, NFS1 and ISCU. Interacts with TP53; the interaction promotes TP53 degradation. Interacts (via SBD domain) with UBXN2A; the interaction with UBXN2A inhibits HSPA9 interaction with and degradation of TP53, thereby promotes TP53 translocation to the nucleus. Interacts with ITPR1 AND VDAC1; this interaction couples ITPR1 to VDAC1. Component of the TIM23 mitochondrial inner membrane pre-sequence translocase complex.

Its subcellular location is the mitochondrion. The protein resides in the nucleus. It is found in the nucleolus. It localises to the cytoplasm. The protein localises to the mitochondrion matrix. It catalyses the reaction ATP + H2O = ADP + phosphate + H(+). Its activity is regulated as follows. The chaperone activity is regulated by ATP-induced allosteric coupling of the nucleotide-binding (NBD) and substrate-binding (SBD) domains. ATP binding in the NBD leads to a conformational change in the NBD, which is transferred through the interdomain linker (IDL) to the substrate-binding domain (SBD). This elicits a reduced substrate affinity and a faster substrate exchange rate. Upon hydrolysis of ATP to ADP, the protein undergoes a conformational change that increases its affinity for substrate proteins. It cycles through repeated phases of ATP hydrolysis and nucleotide exchange, facilitating repeated cycles of substrate binding and release. Functions in collaboration with co-chaperones. Functions with the co-chaperone, DNLZ, to maintain solubility and regulate ATP hydrolysis. Nucleotide exchange factors, GRPEL1 and GRPEL2, accelerate nucleotide exchange. Functionally, mitochondrial chaperone that plays a key role in mitochondrial protein import, folding, and assembly. Plays an essential role in the protein quality control system, the correct folding of proteins, the re-folding of misfolded proteins, and the targeting of proteins for subsequent degradation. These processes are achieved through cycles of ATP binding, ATP hydrolysis, and ADP release, mediated by co-chaperones. In mitochondria, it associates with the TIM (translocase of the inner membrane) protein complex to assist in the import and folding of mitochondrial proteins. Plays an important role in mitochondrial iron-sulfur cluster (ISC) biogenesis, interacts with and stabilizes ISC cluster assembly proteins FXN, NFU1, NFS1 and ISCU. Regulates erythropoiesis via stabilization of ISC assembly. Regulates mitochondrial calcium-dependent apoptosis by coupling two calcium channels, ITPR1 and VDAC1, at the mitochondria-associated endoplasmic reticulum (ER) membrane to facilitate calcium transport from the ER lumen to the mitochondria intermembrane space, providing calcium for the downstream calcium channel MCU, which releases it into the mitochondrial matrix. Although primarily located in the mitochondria, it is also found in other cellular compartments. In the cytosol, it associates with proteins involved in signaling, apoptosis, or senescence. It may play a role in cell cycle regulation via its interaction with and promotion of degradation of TP53. May play a role in the control of cell proliferation and cellular aging. Protects against reactive oxygen species (ROS). Extracellular HSPA9 plays a cytoprotective role by preventing cell lysis following immune attack by the membrane attack complex by disrupting formation of the complex. This chain is Stress-70 protein, mitochondrial, found in Homo sapiens (Human).